Reading from the N-terminus, the 424-residue chain is GTPase Obg (424 aa).

Residues 1–160 form the Obg domain; that stretch reads MFDRVEINIK…YDLILELKLI (160 aa). The region spanning 161 to 328 is the OBG-type G domain; sequence ADVAIIGYPN…LLAKVAEKLD (168 aa). GTP-binding positions include 167-174, 192-196, 213-216, 280-283, and 309-311; these read GYPNVGKS, FTTLS, EVPG, NKID, and SAL. Serine 174 and threonine 194 together coordinate Mg(2+). Positions 349 to 424 constitute an OCT domain; that stretch reads PAPKGKMGFR…IITGRMEWYL (76 aa).

It belongs to the TRAFAC class OBG-HflX-like GTPase superfamily. OBG GTPase family. Monomer. Mg(2+) serves as cofactor.

The protein resides in the cytoplasm. Its function is as follows. An essential GTPase which binds GTP, GDP and possibly (p)ppGpp with moderate affinity, with high nucleotide exchange rates and a fairly low GTP hydrolysis rate. Plays a role in control of the cell cycle, stress response, ribosome biogenesis and in those bacteria that undergo differentiation, in morphogenesis control. This Dehalococcoides mccartyi (strain ATCC BAA-2100 / JCM 16839 / KCTC 5957 / BAV1) protein is GTPase Obg.